The chain runs to 209 residues: MGKNKQSESSKRWLKEHFDDKYVIKAKKQGLRSRAVFKLEEIQAKDGLIKPGMTVVDLGAAPGGWSQYAVKQVGDNGHVIACDILSMDPLPGVDFLMGDFREEAVLDALLNKIGGKNVDVVMSDMAPNMTGNDTADQAKSMYLVELSLDMCRQVLKKNGSYTVKVFMGEGFDQFFNEVKNAFKVVKTRKPDSSRARSREVYLVATGFKL.

Residues Gly63, Trp65, Asp83, Asp99, and Asp124 each coordinate S-adenosyl-L-methionine. The active-site Proton acceptor is Lys164.

Belongs to the class I-like SAM-binding methyltransferase superfamily. RNA methyltransferase RlmE family.

It is found in the cytoplasm. It catalyses the reaction uridine(2552) in 23S rRNA + S-adenosyl-L-methionine = 2'-O-methyluridine(2552) in 23S rRNA + S-adenosyl-L-homocysteine + H(+). Specifically methylates the uridine in position 2552 of 23S rRNA at the 2'-O position of the ribose in the fully assembled 50S ribosomal subunit. The sequence is that of Ribosomal RNA large subunit methyltransferase E from Pseudoalteromonas atlantica (strain T6c / ATCC BAA-1087).